Reading from the N-terminus, the 962-residue chain is Translation initiation factor IF-2 (962 aa).

The segment at 99–365 is disordered; that stretch reads VKAAQTQAAP…GKKGKKLKLE (267 aa). The span at 117 to 141 shows a compositional bias: basic and acidic residues; sequence DAAKARAEAAARAEARAKAEAEAAK. Over residues 145-155 the composition is skewed to low complexity; it reads AKAGNKAKPAA. Over residues 173-216 the composition is skewed to basic and acidic residues; that stretch reads KPAEESKAEKAQADKMPSKKPAEPKEKAAKPKHERNGKGKDAKK. A compositionally biased stretch (low complexity) spans 219-234; sequence KPAAPAVPQPVVSAEE. The span at 235-269 shows a compositional bias: basic and acidic residues; that stretch reads QAQRDEEARRAAALRAHQEALLKEKQERQARREAM. The span at 270-283 shows a compositional bias: low complexity; sequence KQQAEQQAKAAQEA. Residues 338-354 are compositionally biased toward basic and acidic residues; the sequence is GGRDRNNARNGDDERVR. The 170-residue stretch at 462-631 folds into the tr-type G domain; sequence PRPPVVTVMG…LLEAEVLELT (170 aa). Residues 471–478 are G1; that stretch reads GHVDHGKT. A GTP-binding site is contributed by 471 to 478; that stretch reads GHVDHGKT. Residues 496–500 are G2; it reads GITQH. The interval 517-520 is G3; sequence DTPG. Residues 517–521 and 571–574 each bind GTP; these read DTPGH and NKID. Residues 571-574 form a G4 region; sequence NKID. Residues 607–609 form a G5 region; that stretch reads SAK.

This sequence belongs to the TRAFAC class translation factor GTPase superfamily. Classic translation factor GTPase family. IF-2 subfamily.

It localises to the cytoplasm. Its function is as follows. One of the essential components for the initiation of protein synthesis. Protects formylmethionyl-tRNA from spontaneous hydrolysis and promotes its binding to the 30S ribosomal subunits. Also involved in the hydrolysis of GTP during the formation of the 70S ribosomal complex. In Neisseria meningitidis serogroup C (strain 053442), this protein is Translation initiation factor IF-2.